The following is a 142-amino-acid chain: Putative pre-16S rRNA nuclease (142 aa).

It belongs to the YqgF nuclease family.

The protein resides in the cytoplasm. In terms of biological role, could be a nuclease involved in processing of the 5'-end of pre-16S rRNA. The sequence is that of Putative pre-16S rRNA nuclease from Ruminiclostridium cellulolyticum (strain ATCC 35319 / DSM 5812 / JCM 6584 / H10) (Clostridium cellulolyticum).